The primary structure comprises 448 residues: Endoglucanase (448 aa).

An N-terminal signal peptide occupies residues 1-34 (MFSKIKKINFFKKTFSFLIAVVMMLFTVLGTNTY). Residues His70, 74–75 (WY), Tyr101, and His137 each bind substrate. Glu175 functions as the Proton donor in the catalytic mechanism. Tyr237 contributes to the substrate binding site. Residue Glu263 is the Nucleophile of the active site. Substrate contacts are provided by residues 269–270 (AS), Trp297, and 302–304 (KSE).

This sequence belongs to the glycosyl hydrolase 5 (cellulase A) family.

The catalysed reaction is Endohydrolysis of (1-&gt;4)-beta-D-glucosidic linkages in cellulose, lichenin and cereal beta-D-glucans.. The chain is Endoglucanase (eglA) from Clostridium saccharobutylicum.